A 363-amino-acid chain; its full sequence is Neurogenic differentiation factor 2 (363 aa).

Residues 1-116 (MLTRLFKEPS…VRRQKANARE (116 aa)) form a disordered region. Positions 28 to 44 (EDSKTKDEEQERCRLGD) are enriched in basic and acidic residues. Acidic residues predominate over residues 64–83 (AGEEDYDEDVDEDDCGEEGD). The span at 87–98 (PKKRGPKKRKMT) shows a compositional bias: basic residues. A Nuclear localization signal motif is present at residues 93 to 99 (KKRKMTP). In terms of domain architecture, bHLH spans 107–159 (VRRQKANARERTRMHDLNSALDNLLKVVPCYSKTQKLSKIETLRLAKNYIWAL).

Efficient DNA binding requires dimerization with another bHLH protein. As to expression, in adult, expressed strongly in brain and more weakly in skin, muscle, eye and ovary.

Its subcellular location is the nucleus. Its function is as follows. Transcriptional regulator. Appears to mediate neuronal differentiation. This is Neurogenic differentiation factor 2 from Danio rerio (Zebrafish).